Here is a 374-residue protein sequence, read N- to C-terminus: 4-galactosyl-N-acetylglucosaminide 3-alpha-L-fucosyltransferase FUT5 (374 aa).

Over 1–15 the chain is Cytoplasmic; it reads MDLLGAAKPQWPWRR. A helical; Signal-anchor for type II membrane protein transmembrane segment spans residues 16-34; it reads CLAGLLFQLLVAVCFFSYL. At 35-374 the chain is on the lumenal side; it reads RVSRDDATGS…TVRSIAAWFN (340 aa). Residues Asn60, Asn105, Asn167, and Asn198 are each glycosylated (N-linked (GlcNAc...) asparagine).

Belongs to the glycosyltransferase 10 family.

It is found in the golgi apparatus. The protein resides in the golgi stack membrane. The enzyme catalyses a beta-D-galactosyl-(1-&gt;3)-N-acetyl-beta-D-glucosaminyl derivative + GDP-beta-L-fucose = a beta-D-galactosyl-(1-&gt;3)-[alpha-L-fucosyl-(1-&gt;4)]-N-acetyl-beta-D-glucosaminyl derivative + GDP + H(+). It catalyses the reaction an N-acetyl-alpha-neuraminyl-(2-&gt;3)-beta-D-galactosyl-(1-&gt;4)-N-acetyl-beta-D-glucosaminyl derivative + GDP-beta-L-fucose = an alpha-Neu5Ac-(2-&gt;3)-beta-D-Gal-(1-&gt;4)-[alpha-L-Fuc-(1-&gt;3)]-beta-D-GlcNAc derivative + GDP + H(+). The catalysed reaction is an alpha-Neu5Ac-(2-&gt;3)-beta-D-Gal-(1-&gt;4)-beta-D-GlcNAc-(1-&gt;3)-beta-D-Gal-(1-&gt;4)-[alpha-L-Fuc-(1-&gt;3)]-beta-D-GlcNAc derivative + GDP-beta-L-fucose = an alpha-Neu5Ac-(2-&gt;3)-beta-D-Gal-(1-&gt;4)-[alpha-L-Fuc-(1-&gt;3)]-beta-D-GlcNAc-(1-&gt;3)-beta-D-Gal-(1-&gt;4)-[alpha-L-Fuc-(1-&gt;3)]-beta-D-GlcNAc derivative + GDP + H(+). It carries out the reaction a beta-D-galactosyl-(1-&gt;4)-N-acetyl-beta-D-glucosaminyl derivative + GDP-beta-L-fucose = a beta-D-galactosyl-(1-&gt;4)-[alpha-L-fucosyl-(1-&gt;3)]-N-acetyl-beta-D-glucosaminyl derivative + GDP + H(+). The enzyme catalyses a neolactoside nLc4Cer + GDP-beta-L-fucose = a neolactoside III(3)-alpha-Fuc-nLc4Cer + GDP + H(+). It catalyses the reaction a neolactoside nLc6Cer + GDP-beta-L-fucose = beta-D-galactosyl-(1-&gt;4)-N-acetyl-beta-D-glucosaminyl-(1-&gt;3)-beta-D-galactosyl-(1-&gt;4)-[alpha-L-fucosyl-(1-&gt;3)]-N-acetyl-beta-D-glucosaminyl-(1-&gt;3)-beta-D-galactosyl-(1-&gt;4)-beta-D-glucosyl-(1&lt;-&gt;1')-ceramide + GDP + H(+). The catalysed reaction is a neolactoside nLc6Cer(d18:1(4E)) + GDP-beta-L-fucose = a neolactoside III(3)-alpha-Fuc-nLc6Cer(d18:1(4E)) + GDP + H(+). It carries out the reaction a neolactoside nLc4Cer(d18:1(4E)) + GDP-beta-L-fucose = a neolactoside III(3)-alpha-Fuc-nLc4Cer(d18:1(4E)) + GDP + H(+). The enzyme catalyses a neolactoside VI(3)-alpha-NeuNAc-nLc6Cer + GDP-beta-L-fucose = a neolactoside VI(3)-alpha-NeuAc,III(3)-alphaFuc-nLc6Cer + GDP + H(+). It catalyses the reaction beta-D-galactosyl-(1-&gt;4)-N-acetyl-D-glucosamine + GDP-beta-L-fucose = beta-D-galactosyl-(1-&gt;4)-[alpha-L-fucosyl-(1-&gt;3)]-N-acetyl-D-glucosamine + GDP + H(+). The catalysed reaction is N-acetyl-alpha-neuraminosyl-(2-&gt;3)-beta-D-galactosyl-(1-&gt;4)-N-acetyl-beta-D-glucosamine + GDP-beta-L-fucose = N-acetyl-alpha-neuraminosyl-(2-&gt;3)-beta-D-galactosyl-(1-&gt;4)-[alpha-L-fucosyl-(1-&gt;3)]-N-acetyl-beta-D-glucosamine + GDP + H(+). It carries out the reaction alpha-L-Fuc-(1-&gt;2)-beta-D-Gal-(1-&gt;4)-D-GlcNAc + GDP-beta-L-fucose = alpha-L-Fuc-(1-&gt;2)-beta-D-Gal-(1-&gt;4)-[alpha-L-Fuc-(1-&gt;3)]-D-GlcNAc + GDP + H(+). The enzyme catalyses an alpha-Neu5Ac-(2-&gt;3)-beta-D-Gal-(1-&gt;3)-D-GlcNAc derivative + GDP-beta-L-fucose = an alpha-Neu5Ac-(2-&gt;3)-beta-D-Gal-(1-&gt;3)-[alpha-L-Fuc-(1-&gt;4)]-beta-D-GlcNAc derivative + GDP + H(+). Its pathway is protein modification; protein glycosylation. Catalyzes preferentially the transfer of L-fucose, from a guanosine diphosphate-beta-L-fucose, to the N-acetyl-beta-D-glucosamine (GlcNAc) of an N-acetyllactosamine unit (type 2 chain) of an oligosaccharide, or a glycoprotein- and a glycolipid-linked N-acetyllactosamine unit via an alpha (1,3) linkage and participates in the surface expression of VIM-2, Lewis X/SSEA-1 and sialyl Lewis X antigens. Preferentially transfers fucose to the GlcNAc of an internal N-acetyllactosamine unit of a poly-N-acetyllactosamine chain acceptor substrate. Also catalyzes to a lesser extend the transfer of L-fucose to the GlcNAc of a type 1 (beta-D-galactosyl-(1-&gt;3)-N-acetyl-beta-D-glucosaminyl) or H-type 1 (alpha-L-Fuc-(1-&gt;2)-beta-D-Gal-(1-&gt;3)-D-GlcNAc) chain oligosaccharide via an alpha (1,4) linkage. Preferentially catalyzes sialylated type 2 oligosaccharide acceptors over neutral type 2 or H type 2 (alpha-L-Fuc-(1-&gt;2)-beta-D-Gal-(1-&gt;4)-D-GlcNAc) oligosaccharide acceptors. Lactose-based structures are also acceptor substrates. The protein is 4-galactosyl-N-acetylglucosaminide 3-alpha-L-fucosyltransferase FUT5 of Hylobates lar (Lar gibbon).